A 76-amino-acid polypeptide reads, in one-letter code: Putative defensin-like protein 184 (76 aa).

The signal sequence occupies residues 1–21 (MKNSSILFVLIIVVFLISSSG). 4 disulfides stabilise this stretch: C32/C76, C38/C58, C44/C70, and C48/C72.

It belongs to the DEFL family.

It localises to the secreted. The sequence is that of Putative defensin-like protein 184 (LCR18) from Arabidopsis thaliana (Mouse-ear cress).